The primary structure comprises 131 residues: Profilin-3 (131 aa).

The protein belongs to the profilin family. As to quaternary structure, occurs in many kinds of cells as a complex with monomeric actin in a 1:1 ratio.

Its subcellular location is the cytoplasm. The protein localises to the cytoskeleton. Its function is as follows. Binds to actin and affects the structure of the cytoskeleton. At high concentrations, profilin prevents the polymerization of actin, whereas it enhances it at low concentrations. By binding to PIP2, it inhibits the formation of IP3 and DG. This Hevea brasiliensis (Para rubber tree) protein is Profilin-3.